Here is a 337-residue protein sequence, read N- to C-terminus: Ribosomal RNA small subunit methyltransferase H (337 aa).

Residues 36-38, Asp-56, Phe-82, Asp-100, and Gln-107 contribute to the S-adenosyl-L-methionine site; that span reads GGH. The tract at residues 315–337 is disordered; the sequence is LEERSKRIPNPQSPIPASQGDAQ.

This sequence belongs to the methyltransferase superfamily. RsmH family.

It localises to the cytoplasm. It carries out the reaction cytidine(1402) in 16S rRNA + S-adenosyl-L-methionine = N(4)-methylcytidine(1402) in 16S rRNA + S-adenosyl-L-homocysteine + H(+). Its function is as follows. Specifically methylates the N4 position of cytidine in position 1402 (C1402) of 16S rRNA. This Xanthomonas euvesicatoria pv. vesicatoria (strain 85-10) (Xanthomonas campestris pv. vesicatoria) protein is Ribosomal RNA small subunit methyltransferase H.